We begin with the raw amino-acid sequence, 502 residues long: MCGRRGGIWLALAAALLHVSLQGEFQRRLYKELVKNYNPLERPVANDSQPLTVYFSLSLLQIMDVDEKNQVLTTNIWLQMSWTDHYLQWNMSEYPGVKNVRFPDGQIWKPDILLYNSADERFDATFHTNVLVNASGHCQYLPPGIFKSSCYIDVRWFPFDVQQCKLKFGSWSYGGWSLDLQMQEADISSYIPNGEWDLMGIPGKRNEKFYECCKEPYPDVTYTVTMRRRTLYYGLNLLIPCVLISALALLVFLLPADSGEKISLGITVLLSLTVFMLLVAEIMPATSDSVPLIAQYFASTMIIVGLSVVVTVIVLRYHHHDPDGGKMPKWTRIILLNWCAWFLRMKRPGEDKVRPACQHKPRRCSLASVELSAGAGPPTSNGNLLYIGFRGLEGMHCAPTPDSGVVCGRLACSPTHDEHLMHGTHPSDGDPDLAKILEEVRYIANRFRCQDESEVICSEWKFAACVVDRLCLMAFSVFTIICTIGILMSAPNFVEAVSKDFA.

A signal peptide spans 1-22 (MCGRRGGIWLALAAALLHVSLQ). The Extracellular segment spans residues 23 to 233 (GEFQRRLYKE…VTMRRRTLYY (211 aa)). Arg42 and Val44 together coordinate Ca(2+). 3 N-linked (GlcNAc...) asparagine glycosylation sites follow: Asn46, Asn90, and Asn133. A disulfide bridge links Cys150 with Cys164. Residues Ser172 and Tyr210 each coordinate Ca(2+). Cys212 and Cys213 form a disulfide bridge. The next 3 helical transmembrane spans lie at 234–254 (GLNL…VFLL), 262–282 (ISLG…VAEI), and 295–315 (QYFA…VIVL). Positions 260–267 (EKISLGIT) are essential for TMEM35A/NACHO-mediated proper subunit assembly and trafficking to cell membrane. Over 316–469 (RYHHHDPDGG…WKFAACVVDR (154 aa)) the chain is Cytoplasmic. A helical transmembrane segment spans residues 470–490 (LCLMAFSVFTIICTIGILMSA).

It belongs to the ligand-gated ion channel (TC 1.A.9) family. Acetylcholine receptor (TC 1.A.9.1) subfamily. Alpha-7/CHRNA7 sub-subfamily. In terms of assembly, homopentamer. Can also form heteropentamers with CHRNB2, mainly found in basal forebrain cholinergic neurons. Interacts with RIC3; which is required for proper folding and assembly. Interacts with LYPD6. Interacts with CANX. Post-translationally, glycosylations at Asn-46, Asn-90 and Asn-133 are essential for TMEM35A/NACHO-mediated proper subunit assembly and trafficking to the cell membrane. In terms of tissue distribution, higly expressed in brain. ALso expressed in immune cells sucha as macrophages.

The protein localises to the postsynaptic cell membrane. The protein resides in the cell membrane. It carries out the reaction K(+)(in) = K(+)(out). The catalysed reaction is Na(+)(in) = Na(+)(out). It catalyses the reaction Ca(2+)(in) = Ca(2+)(out). The enzyme catalyses choline(out) = choline(in). It carries out the reaction NH4(+)(in) = NH4(+)(out). The catalysed reaction is L-arginine(in) = L-arginine(out). It catalyses the reaction guanidine(out) = guanidine(in). Its activity is regulated as follows. Activated by a myriad of ligands such as acetylcholine, cytisine, nicotine, choline and epibatidine. Oligomeric amyloid-beta protein 42 activates specifially CHRNA7:CHRNB2 nAchRs. Activity is modulated by positive allosteric modulators (PAMs), such as flavonoids, with a wide range of chemical diversity, pharmacological sensitivity and efficacy. AChR activity is inhibited by the antagonists alpha-conotoxons RgIA, ImI and ImII, small disulfide-constrained peptides from cone snails. Component of neuronal acetylcholine receptors (nAChRs) that function as pentameric, ligand-gated cation channels with high calcium permeability among other activities. nAChRs are excitatory neurotrasnmitter receptors formed by a collection of nAChR subunits known to mediate synaptic transmission in the nervous system and the neuromuscular junction. Each nAchR subunit confers differential attributes to channel properties, including activation, deactivation and desensitization kinetics, pH sensitivity, cation permeability, and binding to allosteric modulators. CHRNA7 forms homopentameric neuronal acetylcholine receptors abundantly expressed in the central nervous system, characterized by fast desensitization and high calcium permeability. Also forms heteropentamers with CHRNB2, mainly expressed in basal forebrain cholinergic neurons. Involved in the modulation of calcium-dependent signaling pathways and influences the release of neurotransmitters, including dopamine, glutamate and GABA. Involved in the modulation of calcium-dependent signaling pathways and influences the release of neurotransmitters, including dopamine, glutamate and GABA. Also expressed in non-neuronal cells such as immune cells like lymphocytes, monocytes and macrophages. In T cells, activation induces metabotropic signaling that results in an increase of intracellular Ca2+ concentrations, independent of ionotropic receptor functions. In macrophages, required for acetylcholine-mediated inhibition of TNF and other inflammatory cytokine release. Once activated by acetylcholine, nicotine or other agonists, selectively inhibits production of pro-inflammatory cytokines while leaving anti-inflammatory cytokines undisturbed. Stimulates the cholinergic anti-inflammatory pathway, controlling inflammation by inhibiting NFKB nuclear translocation and activating the JAK2-STAT3 pathway, independently of ion channel activity. Also expressed in the urothelium where it modulates reflex bladder activity by increasing intracellular calcium through internal stores and decreasing basal ATP release. This chain is Neuronal acetylcholine receptor subunit alpha-7 (Chrna7), found in Mus musculus (Mouse).